Here is a 133-residue protein sequence, read N- to C-terminus: Small ribosomal subunit protein uS8 (133 aa).

This sequence belongs to the universal ribosomal protein uS8 family. In terms of assembly, part of the 30S ribosomal subunit. Contacts proteins S5 and S12.

Functionally, one of the primary rRNA binding proteins, it binds directly to 16S rRNA central domain where it helps coordinate assembly of the platform of the 30S subunit. This chain is Small ribosomal subunit protein uS8, found in Deinococcus geothermalis (strain DSM 11300 / CIP 105573 / AG-3a).